Here is a 278-residue protein sequence, read N- to C-terminus: 4-diphosphocytidyl-2-C-methyl-D-erythritol kinase (278 aa).

The active site involves Lys-9. 93–103 (PLGGGLGGGSS) is a binding site for ATP. The active site involves Asp-135.

This sequence belongs to the GHMP kinase family. IspE subfamily.

It carries out the reaction 4-CDP-2-C-methyl-D-erythritol + ATP = 4-CDP-2-C-methyl-D-erythritol 2-phosphate + ADP + H(+). It participates in isoprenoid biosynthesis; isopentenyl diphosphate biosynthesis via DXP pathway; isopentenyl diphosphate from 1-deoxy-D-xylulose 5-phosphate: step 3/6. Functionally, catalyzes the phosphorylation of the position 2 hydroxy group of 4-diphosphocytidyl-2C-methyl-D-erythritol. This is 4-diphosphocytidyl-2-C-methyl-D-erythritol kinase from Nitrosomonas europaea (strain ATCC 19718 / CIP 103999 / KCTC 2705 / NBRC 14298).